Here is a 476-residue protein sequence, read N- to C-terminus: tRNA-2-methylthio-N(6)-dimethylallyladenosine synthase (476 aa).

The MTTase N-terminal domain occupies 5–122; the sequence is KKLYIKTWGC…LPEMINQVKG (118 aa). 6 residues coordinate [4Fe-4S] cluster: Cys14, Cys51, Cys85, Cys159, Cys163, and Cys166. The region spanning 145 to 377 is the Radical SAM core domain; it reads RAEGPSAFVS…QQRINQQAMS (233 aa). In terms of domain architecture, TRAM spans 380 to 443; sequence RAMLGSVQRI…ANSLRGKVIR (64 aa).

The protein belongs to the methylthiotransferase family. MiaB subfamily. As to quaternary structure, monomer. The cofactor is [4Fe-4S] cluster.

It is found in the cytoplasm. The catalysed reaction is N(6)-dimethylallyladenosine(37) in tRNA + (sulfur carrier)-SH + AH2 + 2 S-adenosyl-L-methionine = 2-methylsulfanyl-N(6)-dimethylallyladenosine(37) in tRNA + (sulfur carrier)-H + 5'-deoxyadenosine + L-methionine + A + S-adenosyl-L-homocysteine + 2 H(+). Its function is as follows. Catalyzes the methylthiolation of N6-(dimethylallyl)adenosine (i(6)A), leading to the formation of 2-methylthio-N6-(dimethylallyl)adenosine (ms(2)i(6)A) at position 37 in tRNAs that read codons beginning with uridine. This is tRNA-2-methylthio-N(6)-dimethylallyladenosine synthase from Photorhabdus laumondii subsp. laumondii (strain DSM 15139 / CIP 105565 / TT01) (Photorhabdus luminescens subsp. laumondii).